We begin with the raw amino-acid sequence, 1141 residues long: Isoleucine--tRNA ligase (1141 aa).

The 'HIGH' region motif lies at 50-60 (PSANGMPGIHH). The 'KMSKS' region motif lies at 689 to 693 (KMSKR). Residue Lys-692 participates in ATP binding.

It belongs to the class-I aminoacyl-tRNA synthetase family. IleS type 2 subfamily. In terms of assembly, monomer. Zn(2+) is required as a cofactor.

The protein localises to the cytoplasm. It catalyses the reaction tRNA(Ile) + L-isoleucine + ATP = L-isoleucyl-tRNA(Ile) + AMP + diphosphate. Its function is as follows. Catalyzes the attachment of isoleucine to tRNA(Ile). As IleRS can inadvertently accommodate and process structurally similar amino acids such as valine, to avoid such errors it has two additional distinct tRNA(Ile)-dependent editing activities. One activity is designated as 'pretransfer' editing and involves the hydrolysis of activated Val-AMP. The other activity is designated 'posttransfer' editing and involves deacylation of mischarged Val-tRNA(Ile). This is Isoleucine--tRNA ligase from Bacteroides fragilis (strain ATCC 25285 / DSM 2151 / CCUG 4856 / JCM 11019 / LMG 10263 / NCTC 9343 / Onslow / VPI 2553 / EN-2).